The following is a 164-amino-acid chain: 2S albumin seed storage protein PINP1 (164 aa).

The signal sequence occupies residues 1 to 29 (MGVFSSPMSTLRWVTLFAALLSLLEWGTA). The segment covering 92–107 (DQSQSYDSSTDSDSQD) has biased composition (low complexity). The tract at residues 92-137 (DQSQSYDSSTDSDSQDGAPLNQRRRRRGEGRGREEEEAVERAEELP) is disordered. Residues 120 to 137 (EGRGREEEEAVERAEELP) show a composition bias toward basic and acidic residues. An N-linked (GalNAc...) asparagine glycan is attached at Asn138.

The protein belongs to the 2S seed storage albumins family.

The sequence is that of 2S albumin seed storage protein PINP1 from Pinus pinea (Italian stone pine).